A 284-amino-acid polypeptide reads, in one-letter code: Pseudouridine-5'-phosphate glycosidase (284 aa).

Catalysis depends on E17, which acts as the Proton donor. Substrate-binding residues include K77 and V97. D126 contacts Mn(2+). S128–D130 is a substrate binding site. The Nucleophile role is filled by K147.

It belongs to the pseudouridine-5'-phosphate glycosidase family. Homotrimer. It depends on Mn(2+) as a cofactor.

The catalysed reaction is D-ribose 5-phosphate + uracil = psi-UMP + H2O. Its function is as follows. Catalyzes the reversible cleavage of pseudouridine 5'-phosphate (PsiMP) to ribose 5-phosphate and uracil. Functions biologically in the cleavage direction, as part of a pseudouridine degradation pathway. The chain is Pseudouridine-5'-phosphate glycosidase from Thermotoga neapolitana (strain ATCC 49049 / DSM 4359 / NBRC 107923 / NS-E).